Here is an 87-residue protein sequence, read N- to C-terminus: Prolactin-releasing peptide (87 aa).

Residues M1–A22 form the signal peptide. At F53 the chain carries Phenylalanine amide. Residues A58 to G87 constitute a propeptide that is removed on maturation.

As to expression, medulla oblongata and hypothalamus.

It is found in the secreted. In terms of biological role, stimulates prolactin (PRL) release and regulates the expression of prolactin through its receptor GPR10. May stimulate lactotrophs directly to secrete PRL. The polypeptide is Prolactin-releasing peptide (PRLH) (Homo sapiens (Human)).